Here is a 450-residue protein sequence, read N- to C-terminus: Putative zinc metalloprotease PA3649 (450 aa).

Position 21 (H21) interacts with Zn(2+). E22 is an active-site residue. Residue H25 coordinates Zn(2+). A helical transmembrane segment spans residues 97–119 (IAIVAAGPIANFLLAILFFWVVA). The PDZ domain maps to 199–291 (GWLKGEDNPD…VLDVALELAV (93 aa)). Residues 425 to 444 (AWGMQIGISLVVGVMLLALV) traverse the membrane as a helical segment.

The protein belongs to the peptidase M50B family. Zn(2+) is required as a cofactor.

The protein resides in the cell inner membrane. The protein is Putative zinc metalloprotease PA3649 of Pseudomonas aeruginosa (strain ATCC 15692 / DSM 22644 / CIP 104116 / JCM 14847 / LMG 12228 / 1C / PRS 101 / PAO1).